Reading from the N-terminus, the 836-residue chain is MDGPRSDMGRSDVSRSDMSRSDMGRSDMGRSDVGRCGGGPLQPSATPSPEPEPEPEPEPDRGSRSRGGRGRSFWARCCGCCSCRNAADDDWGREPSDSRDRGSSSRGGRPDSRGGGVNAAGDGTIREGMLVVTGVDLLSSRSDQNRREHHTDEFEYEELIVRRGQPFHLVLFLSRPYESSDRIALELQIGNNPEVGKGTHVIIPVGKGNSGGWKAQVTKASGQTLNLRVHSPASAIIGKFQFTVRTRTEAGEFQLPFDPRNEIYILFNPWCPEDIVYVDHEDWRQDYVLNESGRIYYGTEAQIGERTWNYGQFDHGVLDACLYILDRRGMPYGGRGDPVSVSRVISAMVNSLDDNGVLIGNWSGDYSRGTNPSAWVGSVEILLSYLRTGYSVPYGQCWVFAGVTTTVLRCLGLATRTVTNFNSAHDTDTSLTMDIYFDENMKPLEHLNRDSVWNFHVWNDCWMKRPDLPSGFDGWQVVDATPQETSSGIFCCGPCSVESVKNGLVYMKYDTPFIFAEVNSDKVYWQRQDDGSFKIVYVEEKAIGTLIVTKAVRSHMREDITHIYKHPEGSDAERKAVETAAAHGSKPNVYDSRDSAEDVAMQVEAQDAVMGQDLTVSVVLTNRSSSRRTVKLHLYLSVTFYTGVTGSIFKESKKEVVLAAGSSDSVVMPVAYKEYRPHLVDQGAMLLNVSGHVKESGQVLAKQHTFRVRTPDLSLTLLGAAVVGQECEVQIVFRNPLPITLTNVVFRLEGSGLQRPKILNVGDIGGNETVTLRQTFVPVRPGPRQLIASLDSPQLSQVHGVIQVDVAPASGGRGFLHAGGDSYSGETIPMTSRGEA.

Residues 1–33 are compositionally biased toward basic and acidic residues; the sequence is MDGPRSDMGRSDVSRSDMSRSDMGRSDMGRSDV. 2 disordered regions span residues 1-68 and 89-125; these read MDGP…SRGG and DDWGREPSDSRDRGSSSRGGRPDSRGGGVNAAGDGTI. The residue at position 46 (T46) is a Phosphothreonine. S48, S98, and S112 each carry phosphoserine. Basic and acidic residues predominate over residues 89-112; that stretch reads DDWGREPSDSRDRGSSSRGGRPDS. Active-site residues include C397, H456, and D479. N519, D521, E568, and E573 together coordinate Ca(2+). S824 carries the phosphoserine modification.

This sequence belongs to the transglutaminase superfamily. Transglutaminase family. In terms of assembly, interacts with PLAAT4. It depends on Ca(2+) as a cofactor. Post-translationally, palmitoylated. In terms of processing, the membrane anchorage region possesses a cluster of five cysteines within which fatty acid(s) may become thioester-linked. It is subject to phorbol ester-stimulated phosphorylation and is hypersensitive to proteolysis, which releases the enzyme in a soluble form. Tyrosine-phosphorylated.

Its subcellular location is the membrane. It carries out the reaction L-glutaminyl-[protein] + L-lysyl-[protein] = [protein]-L-lysyl-N(6)-5-L-glutamyl-[protein] + NH4(+). Its activity is regulated as follows. Inhibited by retinoic acid, but phorbol ester treatment activates it. In terms of biological role, catalyzes the cross-linking of proteins and the conjugation of polyamines to proteins. Responsible for cross-linking epidermal proteins during formation of the stratum corneum. Involved in cell proliferation. The chain is Protein-glutamine gamma-glutamyltransferase K (TGM1) from Oryctolagus cuniculus (Rabbit).